The chain runs to 391 residues: GTPase HflX (391 aa).

Residues 162–181 (LAQQRGGAKGTRGASRGAGE) are disordered. Positions 222 to 391 (KIGAIVGYTN…KITDIIIFDK (170 aa)) constitute a Hflx-type G domain. Residues 228-235 (GYTNAGKS), 253-257 (FATLD), 278-281 (DTVG), 344-347 (NKMD), and 369-371 (SVT) each bind GTP. Residues Ser-235 and Thr-255 each coordinate Mg(2+).

Belongs to the TRAFAC class OBG-HflX-like GTPase superfamily. HflX GTPase family. As to quaternary structure, monomer. Associates with the 50S ribosomal subunit. It depends on Mg(2+) as a cofactor.

It localises to the cytoplasm. In terms of biological role, GTPase that associates with the 50S ribosomal subunit and may have a role during protein synthesis or ribosome biogenesis. The sequence is that of GTPase HflX from Treponema denticola (strain ATCC 35405 / DSM 14222 / CIP 103919 / JCM 8153 / KCTC 15104).